The primary structure comprises 622 residues: Type 2 DNA topoisomerase 6 subunit B (622 aa).

ATP-binding positions include N48, D80, 101–102 (SR), 111–118 (GQQGIGIS), and K435.

The protein belongs to the TOP6B family. In terms of assembly, homodimer. Heterotetramer of two Top6A and two Top6B chains.

The enzyme catalyses ATP-dependent breakage, passage and rejoining of double-stranded DNA.. Its function is as follows. Relaxes both positive and negative superturns and exhibits a strong decatenase activity. The protein is Type 2 DNA topoisomerase 6 subunit B of Methanococcoides burtonii (strain DSM 6242 / NBRC 107633 / OCM 468 / ACE-M).